We begin with the raw amino-acid sequence, 671 residues long: tRNA(Met) cytidine acetyltransferase TmcA (671 aa).

ATP is bound by residues glutamine 180, 202–211 (GRGKSALAGQ), and arginine 319. In terms of domain architecture, N-acetyltransferase spans 349–531 (IRFSAFTQAL…SGCYTAMALL (183 aa)). Acetyl-CoA-binding positions include 461 to 463 (IAV), 468 to 474 (QREGIGQ), glutamate 499, and arginine 506.

Belongs to the RNA cytidine acetyltransferase family. TmcA subfamily.

It localises to the cytoplasm. The enzyme catalyses cytidine(34) in elongator tRNA(Met) + acetyl-CoA + ATP + H2O = N(4)-acetylcytidine(34) in elongator tRNA(Met) + ADP + phosphate + CoA + H(+). In terms of biological role, catalyzes the formation of N(4)-acetylcytidine (ac(4)C) at the wobble position of tRNA(Met), by using acetyl-CoA as an acetyl donor and ATP (or GTP). The protein is tRNA(Met) cytidine acetyltransferase TmcA of Citrobacter koseri (strain ATCC BAA-895 / CDC 4225-83 / SGSC4696).